The following is a 1317-amino-acid chain: DNA-directed RNA polymerase subunit beta' (1317 aa).

4 residues coordinate Zn(2+): C60, C62, C75, and C78. 3 residues coordinate Mg(2+): D535, D537, and D539. Positions 890, 967, 974, and 977 each coordinate Zn(2+).

This sequence belongs to the RNA polymerase beta' chain family. In terms of assembly, the RNAP catalytic core consists of 2 alpha, 1 beta, 1 beta' and 1 omega subunit. When a sigma factor is associated with the core the holoenzyme is formed, which can initiate transcription. Mg(2+) serves as cofactor. It depends on Zn(2+) as a cofactor.

The catalysed reaction is RNA(n) + a ribonucleoside 5'-triphosphate = RNA(n+1) + diphosphate. Functionally, DNA-dependent RNA polymerase catalyzes the transcription of DNA into RNA using the four ribonucleoside triphosphates as substrates. The polypeptide is DNA-directed RNA polymerase subunit beta' (Nocardia farcinica (strain IFM 10152)).